A 923-amino-acid polypeptide reads, in one-letter code: Protein prickle (923 aa).

The interval 1–196 (MSYPYQKSHH…HPFHSPASAA (196 aa)) is disordered. The segment covering 11 to 34 (QTQQPQQNGHPQHQLMLQQQQQAD) has biased composition (low complexity). Residues 37 to 49 (PHHHHHHHVHHAT) are compositionally biased toward basic residues. 2 stretches are compositionally biased toward low complexity: residues 59-73 (RSPLRSPQSPPLYSG) and 106-118 (MPGMMPGQQPPGM). Over residues 122–134 (LGGGGGGGGGGSA) the composition is skewed to gly residues. Composition is skewed to low complexity over residues 152–169 (STVTNTSSTATNAPSARS) and 184–196 (SSHHPFHSPASAA). The PET domain occupies 275 to 383 (GGGHNYSQSD…TVKQITTTLI (109 aa)). LIM zinc-binding domains lie at 382–446 (LICE…ETLK), 447–507 (PRCS…MFAE), and 508–570 (YCDY…GEPP). Disordered stretches follow at residues 571–668 (TPSD…LDLT) and 703–867 (GPIA…SSAD). The span at 709–718 (NGNGPTGGGP) shows a compositional bias: gly residues. The span at 738–748 (ESPSFSGTNSP) shows a compositional bias: polar residues. A compositionally biased stretch (basic and acidic residues) spans 777 to 786 (HSIKEVRFEG). Positions 792–805 (LPRTKSYCQRNGGQ) are enriched in polar residues. Positions 817 to 827 (SDDDELAEDET) are enriched in acidic residues. Over residues 840–852 (QREQQRPVDDSDA) the composition is skewed to basic and acidic residues. Residues 853–865 (RSVCSTCSSSSSS) show a composition bias toward low complexity.

This sequence belongs to the prickle / espinas / testin family. As to quaternary structure, interacts with dsh; PET and LIM domains interact with dsh DEP domain, in wing cells. Interacts with Vang in photoreceptor cells.

Its subcellular location is the cell membrane. In terms of biological role, acts in a planar cell polarity (PCP) complex; polarization along the apical/basal axis of epithelial cells. PCP signaling in the wing disk requires the receptor fz and the cytoplasmic proteins dsh and pk. These act in a feedback loop leading to activation of the jnk cascade and subsequent polarized arrangement of hairs and bristles. Dgo and pk compete with one another for dsh binding, thereby modulating fz dsh activity and ensuring tight control over fz PCP signaling. Vang, stan and pk function together to regulate the establishment of tissue polarity in the adult eye. The polypeptide is Protein prickle (Anopheles gambiae (African malaria mosquito)).